The sequence spans 599 residues: Transcription factor COE4 (599 aa).

The tract at residues 64–67 (RKSN) is interaction with DNA. Residues 152-171 (CRVLLTHEIMCSRCCDRKSC) form a C5-type zinc finger. 2 interaction with DNA regions span residues 198–205 (NCLKNAGN) and 237–240 (NNSK). Positions 256-339 (PCIKAISPGE…KGAPGRFVYT (84 aa)) constitute an IPT/TIG domain. Disordered regions lie at residues 449–473 (GYAR…SSYG) and 556–586 (VLRP…TDKF). Residues 464-473 (SPGSQQSSYG) are compositionally biased toward low complexity.

This sequence belongs to the COE family. As to quaternary structure, forms either a homodimer or a heterodimer with a related family member. In terms of tissue distribution, expressed in the olfactory epithelium, including in both neuronal and basal cell layers. Absent in the vomeronasal organ. Absent from NK cells and CD8(+) T cells.

It localises to the nucleus. In terms of biological role, transcription factor. Positively modulates transcription, perhaps less strongly than other early B cell factor/EBF family proteins. Binds an EBF1/Olf-1 consensus site in vitro. The chain is Transcription factor COE4 (Ebf4) from Mus musculus (Mouse).